A 208-amino-acid polypeptide reads, in one-letter code: Adenylyl-sulfate kinase 3 (208 aa).

Residue 37-45 participates in ATP binding; that stretch reads GLSGSGKST. Substrate contacts are provided by residues Asp-67, Arg-70, Arg-84, Asn-87, 110–111, and Gly-160; that span reads IS. The Phosphoserine intermediate role is filled by Ser-111.

This sequence belongs to the APS kinase family. As to expression, expressed in root vasculature, root tips, leaf epidermal and guard cells, pollen grains and radicle of immature seeds.

Its subcellular location is the cytoplasm. The protein localises to the cytosol. The catalysed reaction is adenosine 5'-phosphosulfate + ATP = 3'-phosphoadenylyl sulfate + ADP + H(+). It participates in sulfur metabolism; hydrogen sulfide biosynthesis; sulfite from sulfate: step 2/3. Catalyzes the synthesis of activated sulfate for the sulfation of secondary metabolites, including the glucosinolates. Essential for plant reproduction and viability. The polypeptide is Adenylyl-sulfate kinase 3 (Arabidopsis thaliana (Mouse-ear cress)).